The sequence spans 202 residues: Small ribosomal subunit protein uS5 (202 aa).

The segment covering 1-13 (MPGQQRRGGGSGG) has biased composition (gly residues). The disordered stretch occupies residues 1 to 31 (MPGQQRRGGGSGGSDRRERRDRSGGGPAQEK). Positions 14–23 (SDRRERRDRS) are enriched in basic and acidic residues. An S5 DRBM domain is found at 34–97 (YVERVVAINR…EEAKKHFFKV (64 aa)).

Belongs to the universal ribosomal protein uS5 family. In terms of assembly, part of the 30S ribosomal subunit. Contacts proteins S4 and S8.

With S4 and S12 plays an important role in translational accuracy. Its function is as follows. Located at the back of the 30S subunit body where it stabilizes the conformation of the head with respect to the body. This Parafrankia sp. (strain EAN1pec) protein is Small ribosomal subunit protein uS5.